The following is a 593-amino-acid chain: Sodium-independent sulfate anion transporter (593 aa).

Residues 1 to 34 (MAPDTCCCSATALRRRLPVLAWVPDYSLQWLRLD) are Extracellular-facing. A helical membrane pass occupies residues 35-55 (FIAGLSVGLTVIPQALAYAEV). A topological domain (cytoplasmic) is located at residue A56. Residues 57-77 (GLPPQYGLYSAFMGCFVYFFL) form a helical membrane-spanning segment. The Extracellular portion of the chain corresponds to 78–82 (GTSRD). The helical transmembrane segment at 83–100 (VTLGPTAIMSLLVSFYTF) threads the bilayer. At 101-106 (REPAYA) the chain is on the cytoplasmic side. The chain crosses the membrane as a helical span at residues 107 to 127 (VLLAFLSGCIQLAMGLLHLGF). Over 128–176 (LLDFISCPVIKGFTSAASITIGFGQIKNLLGLQKIPRQFFLQVYHTFLH) the chain is Extracellular. Residues 177–197 (IGETRVGDAVLGLASMLLLLV) traverse the membrane as a helical segment. Residues 198-233 (LKCMREHMPPPHPEMPLAVKFSRGLVWTVTTARNAL) lie on the Cytoplasmic side of the membrane. The helical transmembrane segment at 234-254 (VVSSAALIAYAFEVTGSHPFV) threads the bilayer. At 255-287 (LTGKIAEGLPPVRIPPFSVTRDNKTISFSEMVQ) the chain is on the extracellular side. The helical transmembrane segment at 288–308 (DMGAGLAVVPLMGLLESIAVA) threads the bilayer. Residues 309–324 (KSFASQNNYRIDANQE) are Cytoplasmic-facing. A helical membrane pass occupies residues 325–345 (LLAIGLTNVLGSLVSSYPVTG). Topologically, residues 346–361 (SFGRTAVNAQTGVCTP) are extracellular. The helical transmembrane segment at 362–382 (AGGLVTGALVLLSLNYLTSLF) threads the bilayer. A topological domain (cytoplasmic) is located at residue S383. The chain crosses the membrane as a helical span at residues 384 to 404 (YIPKSALAAVIITAVTPLFDV). Over 405–417 (KIFRSLWRVQRLD) the chain is Extracellular. Residues 418–438 (LLPLCVTFLLSFWEIQYGILA) traverse the membrane as a helical segment. Residues 439–593 (GSLVSLLILL…SSLLKSPSGP (155 aa)) lie on the Cytoplasmic side of the membrane. The STAS domain occupies 453 to 566 (RPKTQVSEGQ…EEAEKFLQQE (114 aa)). A disordered region spans residues 564 to 593 (QQEPGTEPNSIHEDAVPEQRSSLLKSPSGP). Polar residues predominate over residues 582-593 (QRSSLLKSPSGP).

Belongs to the SLC26A/SulP transporter (TC 2.A.53) family. As to expression, abundantly expressed in the cerebellum, with a predominant expression in Purkinje cells (at protein level). Predominantly expressed in the kidney and brain. In the kidney localizes in collecting duct intercalated cells (at protein level). In terms of tissue distribution, predominantly expressed in the brain with lower levels in the kidney.

The protein localises to the cell membrane. It is found in the lysosome membrane. It localises to the apical cell membrane. The protein resides in the basolateral cell membrane. It carries out the reaction hydrogencarbonate(in) + chloride(out) = hydrogencarbonate(out) + chloride(in). The enzyme catalyses sulfate(in) + H(+)(in) = sulfate(out) + H(+)(out). It catalyses the reaction oxalate(in) + chloride(out) = oxalate(out) + chloride(in). In terms of biological role, sodium-independent anion exchanger mediating bicarbonate, chloride, sulfate and oxalate transport. Exhibits sodium-independent sulfate anion transporter activity that may cooperate with SLC26A2 to mediate DIDS-sensitive sulfate uptake into high endothelial venules endothelial cells (HEVEC). In the kidney, mediates chloride-bicarbonate exchange, facilitating V-ATPase-mediated acid secretion. May function as a chloride channel, playing an important role in moderating chloride homeostasis and neuronal activity in the cerebellum. This chain is Sodium-independent sulfate anion transporter, found in Mus musculus (Mouse).